The following is a 78-amino-acid chain: Putative membrane protein insertion efficiency factor (78 aa).

This sequence belongs to the UPF0161 family.

Its subcellular location is the cell inner membrane. Its function is as follows. Could be involved in insertion of integral membrane proteins into the membrane. The chain is Putative membrane protein insertion efficiency factor from Thiobacillus denitrificans (strain ATCC 25259 / T1).